The primary structure comprises 217 residues: Glutathione S-transferase 1 (217 aa).

In terms of domain architecture, GST N-terminal spans 1 to 83 (MVMTLYKLDA…YLVSKYGADD (83 aa)). Glutathione contacts are provided by residues serine 11, 53 to 55 (HTV), and 67 to 69 (DSH). The 123-residue stretch at 89-211 (DPKKRAIVDQ…APGNDLCKDL (123 aa)) folds into the GST C-terminal domain.

Belongs to the GST superfamily. Theta family. In terms of assembly, homodimer.

It carries out the reaction RX + glutathione = an S-substituted glutathione + a halide anion + H(+). Functionally, conjugation of reduced glutathione to a wide number of exogenous and endogenous hydrophobic electrophiles. The sequence is that of Glutathione S-transferase 1 (GST1) from Manduca sexta (Tobacco hawkmoth).